The following is a 293-amino-acid chain: 4-hydroxy-tetrahydrodipicolinate synthase (293 aa).

Thr-51 lines the pyruvate pocket. The Proton donor/acceptor role is filled by Tyr-140. Catalysis depends on Lys-168, which acts as the Schiff-base intermediate with substrate. Pyruvate is bound at residue Ile-209.

The protein belongs to the DapA family. Homotetramer; dimer of dimers.

The protein localises to the cytoplasm. The catalysed reaction is L-aspartate 4-semialdehyde + pyruvate = (2S,4S)-4-hydroxy-2,3,4,5-tetrahydrodipicolinate + H2O + H(+). It functions in the pathway amino-acid biosynthesis; L-lysine biosynthesis via DAP pathway; (S)-tetrahydrodipicolinate from L-aspartate: step 3/4. Catalyzes the condensation of (S)-aspartate-beta-semialdehyde [(S)-ASA] and pyruvate to 4-hydroxy-tetrahydrodipicolinate (HTPA). The polypeptide is 4-hydroxy-tetrahydrodipicolinate synthase (Streptococcus mutans serotype c (strain ATCC 700610 / UA159)).